Reading from the N-terminus, the 323-residue chain is MTIRAVVRGVGHYLPDRIVPNSELEALVETTDEWIRTRSGIERRHFAAEGQTTSDLAARAARAALADAGLQPDDIDTLIVATSTADLTFPSAATMVQAALGMSRGFAFDVQAVCAGFVYALANADALIRSGQANRVLVIGAETFSRLMDWSDRATCVLFGDGAGALVLEGAEGAGTSADRGILATDLHSDGRFKDLLYVDGGASTGSTGHLRMQGREVFRHAVEKLAETAHTALDKAGLTSADVDWIVPHQANLRIISATAQRMQVPMDRVILTVQDHGNTSAASIPLALSVGKARGQIKEGDLLVTEAIGGGLAWGSVVLRW.

Catalysis depends on residues Cys-114 and His-250. Residues 251 to 255 (QANLR) form an ACP-binding region. Residue Asn-280 is part of the active site.

It belongs to the thiolase-like superfamily. FabH family. As to quaternary structure, homodimer.

It is found in the cytoplasm. It catalyses the reaction malonyl-[ACP] + acetyl-CoA + H(+) = 3-oxobutanoyl-[ACP] + CO2 + CoA. It participates in lipid metabolism; fatty acid biosynthesis. Its function is as follows. Catalyzes the condensation reaction of fatty acid synthesis by the addition to an acyl acceptor of two carbons from malonyl-ACP. Catalyzes the first condensation reaction which initiates fatty acid synthesis and may therefore play a role in governing the total rate of fatty acid production. Possesses both acetoacetyl-ACP synthase and acetyl transacylase activities. Its substrate specificity determines the biosynthesis of branched-chain and/or straight-chain of fatty acids. In Cereibacter sphaeroides (strain ATCC 17025 / ATH 2.4.3) (Rhodobacter sphaeroides), this protein is Beta-ketoacyl-[acyl-carrier-protein] synthase III.